Consider the following 160-residue polypeptide: uncharacterized protein (160 aa).

A signal peptide spans 1-29 (MTGKTHIMGGIASCTAAAYYYGFDPVLMA). The next 2 membrane-spanning stretches (helical) occupy residues 67-87 (TFTH…TYIP) and 137-157 (QLVL…LFHG).

It to E.coli YdjM.

The protein resides in the cell membrane. This is an uncharacterized protein from Bacillus subtilis (strain 168).